We begin with the raw amino-acid sequence, 392 residues long: MAMPSIRHVRAFVVRGGGADYHDQADGHWIDDHISTPMARYPEYRQSRQSFGINVLGTLVVEIEASDGTVGFAVTTGGEIGAFIVEKHLARFLEGQLVTDIEKMWDQMYFSTLYYGRKGVVLNTISGVDLALWDLLAKVRKEPVYQLLGGPVRDELQFYATGARPDLAKEMGFIGGKLPLQHSPAEGEEGLRKNIDKLAEMRGRVGGDFWLMYDCWMSLDVTYATKLAKAAHEHGLKWIEEALPPDDYWGYAELRRNVPRGMMVSTGEHEATRWGFRMLLEMGCCDLIQPDVGWCGGITELVKISALADAHNVLVVPHGSSVYSYHFVVTRHNSPFAEFLMMAPKADQVVPMFTPLLLDEPVPVNGRMRVPDTPGFGVRLNPECKLERPYQH.

2 residues coordinate substrate: H22 and R48. Positions 214, 240, and 268 each coordinate Mg(2+). H318 acts as the Proton acceptor in catalysis. E338 contacts substrate.

It belongs to the mandelate racemase/muconate lactonizing enzyme family. RhamD subfamily. In terms of assembly, homooctamer; tetramer of dimers. Requires Mg(2+) as cofactor.

The catalysed reaction is L-rhamnonate = 2-dehydro-3-deoxy-L-rhamnonate + H2O. Catalyzes the dehydration of L-rhamnonate to 2-keto-3-deoxy-L-rhamnonate (KDR). The polypeptide is L-rhamnonate dehydratase (Paraburkholderia phymatum (strain DSM 17167 / CIP 108236 / LMG 21445 / STM815) (Burkholderia phymatum)).